A 648-amino-acid chain; its full sequence is 1-deoxy-D-xylulose-5-phosphate synthase 1 (648 aa).

Thiamine diphosphate contacts are provided by residues histidine 82 and alanine 123–serine 125. Aspartate 154 is a Mg(2+) binding site. Residues glycine 155 to serine 156, asparagine 183, tyrosine 292, and glutamate 374 contribute to the thiamine diphosphate site. Position 183 (asparagine 183) interacts with Mg(2+).

It belongs to the transketolase family. DXPS subfamily. As to quaternary structure, homodimer. The cofactor is Mg(2+). It depends on thiamine diphosphate as a cofactor.

It carries out the reaction D-glyceraldehyde 3-phosphate + pyruvate + H(+) = 1-deoxy-D-xylulose 5-phosphate + CO2. It functions in the pathway metabolic intermediate biosynthesis; 1-deoxy-D-xylulose 5-phosphate biosynthesis; 1-deoxy-D-xylulose 5-phosphate from D-glyceraldehyde 3-phosphate and pyruvate: step 1/1. Functionally, catalyzes the acyloin condensation reaction between C atoms 2 and 3 of pyruvate and glyceraldehyde 3-phosphate to yield 1-deoxy-D-xylulose-5-phosphate (DXP). The chain is 1-deoxy-D-xylulose-5-phosphate synthase 1 from Cereibacter sphaeroides (strain ATCC 17023 / DSM 158 / JCM 6121 / CCUG 31486 / LMG 2827 / NBRC 12203 / NCIMB 8253 / ATH 2.4.1.) (Rhodobacter sphaeroides).